Reading from the N-terminus, the 409-residue chain is Argininosuccinate synthase (409 aa).

9-17 serves as a coordination point for ATP; it reads AYSGGLDTS. Tyrosine 86 provides a ligand contact to L-citrulline. Glycine 116 lines the ATP pocket. 3 residues coordinate L-aspartate: threonine 118, asparagine 122, and aspartate 123. Position 122 (asparagine 122) interacts with L-citrulline. L-citrulline-binding residues include arginine 126, serine 174, serine 183, glutamate 259, and tyrosine 271.

The protein belongs to the argininosuccinate synthase family. Type 1 subfamily. As to quaternary structure, homotetramer.

It is found in the cytoplasm. The enzyme catalyses L-citrulline + L-aspartate + ATP = 2-(N(omega)-L-arginino)succinate + AMP + diphosphate + H(+). Its pathway is amino-acid biosynthesis; L-arginine biosynthesis; L-arginine from L-ornithine and carbamoyl phosphate: step 2/3. This is Argininosuccinate synthase from Halalkalibacterium halodurans (strain ATCC BAA-125 / DSM 18197 / FERM 7344 / JCM 9153 / C-125) (Bacillus halodurans).